The chain runs to 254 residues: AA9 family lytic polysaccharide monooxygenase A (254 aa).

Residues 1–19 (MKYSILGLTALSFVASAAA) form the signal peptide. His-20 contacts Cu(2+). His-20 carries the methylhistidine modification. Val-28 provides a ligand contact to (1,4-beta-D-glucosyl)n. N-linked (GlcNAc...) asparagine glycosylation is present at Asn-52. Cys-60 and Cys-186 are oxidised to a cystine. Residues Val-66, Val-67, Asp-77, and Asn-86 each coordinate (1,4-beta-D-glucosyl)n. Residue His-97 coordinates Cu(2+). An N-linked (GlcNAc...) asparagine glycan is attached at Asn-129. The (1,4-beta-D-glucosyl)n site is built by Val-148 and Arg-159. Positions 166 and 181 each coordinate O2. Residue Tyr-183 participates in Cu(2+) binding.

The protein belongs to the polysaccharide monooxygenase AA9 family. Cu(2+) serves as cofactor. Post-translationally, the catalytically essential N-terminal histidine His-20 is post-translationally modified by methylation to prevent protonation of the histidine side chain, and protect the critical active site of the enzyme from oxidative damage.

The protein localises to the secreted. The enzyme catalyses [(1-&gt;4)-beta-D-glucosyl]n+m + reduced acceptor + O2 = 4-dehydro-beta-D-glucosyl-[(1-&gt;4)-beta-D-glucosyl]n-1 + [(1-&gt;4)-beta-D-glucosyl]m + acceptor + H2O.. The polyphenol cinnamtannin B1 contained in methanolic extract of Cinnamomum cassia (cinnamon) acts as an inhibitor of catalytic activity. In terms of biological role, lytic polysaccharide monooxygenase (LPMO) that depolymerizes crystalline and amorphous polysaccharides via the oxidation of scissile alpha- or beta-(1-4)-glycosidic bonds, yielding C1 or C4 oxidation product. Catalysis by LPMOs requires the reduction of the active-site copper from Cu(II) to Cu(I) by a reducing agent and H(2)O(2) or O(2) as a cosubstrate. Is able to cleave phosphoric acid swollen cellulose (PASC) in the presence of a reducing agent, yielding a range of cellooligosaccharides dominated by cellobiose and cellotriose. Activity is less sensitive to the reducing agent potential when cleaving xylan, suggesting that distinct catalytic mechanisms exist for xylan and glucan cleavage. The protein is AA9 family lytic polysaccharide monooxygenase A of Panus similis (Lentinoid fungus).